Consider the following 252-residue polypeptide: 3-dehydroquinate dehydratase (252 aa).

3-dehydroquinate contacts are provided by residues 46–48 and R82; that span reads EWR. H143 acts as the Proton donor/acceptor in catalysis. K170 serves as the catalytic Schiff-base intermediate with substrate. 3-dehydroquinate-binding residues include R212, S231, and Q235.

The protein belongs to the type-I 3-dehydroquinase family. In terms of assembly, homodimer.

The catalysed reaction is 3-dehydroquinate = 3-dehydroshikimate + H2O. The protein operates within metabolic intermediate biosynthesis; chorismate biosynthesis; chorismate from D-erythrose 4-phosphate and phosphoenolpyruvate: step 3/7. In terms of biological role, involved in the third step of the chorismate pathway, which leads to the biosynthesis of aromatic amino acids. Catalyzes the cis-dehydration of 3-dehydroquinate (DHQ) and introduces the first double bond of the aromatic ring to yield 3-dehydroshikimate. This Listeria monocytogenes serovar 1/2a (strain ATCC BAA-679 / EGD-e) protein is 3-dehydroquinate dehydratase.